Here is a 372-residue protein sequence, read N- to C-terminus: Aminomethyltransferase (372 aa).

This sequence belongs to the GcvT family. The glycine cleavage system is composed of four proteins: P, T, L and H.

The catalysed reaction is N(6)-[(R)-S(8)-aminomethyldihydrolipoyl]-L-lysyl-[protein] + (6S)-5,6,7,8-tetrahydrofolate = N(6)-[(R)-dihydrolipoyl]-L-lysyl-[protein] + (6R)-5,10-methylene-5,6,7,8-tetrahydrofolate + NH4(+). The glycine cleavage system catalyzes the degradation of glycine. In Burkholderia mallei (strain NCTC 10247), this protein is Aminomethyltransferase.